The following is a 201-amino-acid chain: MKALITGFEPFDKEEINPSWEAVSSLHNNIDDIEIIKLKLPTVFKKSYEKLFDSLENIKPDIVICVGQAGGRYEISLERVAVNIDDAGIKDNEGNQPIDEIIFNDGENAYFSRLPIKRIKEELNKISIPSAVSNTAGTFVCNHIMYSLLYYIKKNNLNIKGGFIHVPYITEQILDKPNTPYMTKDMIVKALEVIIKTSLYN.

Residues Glu-78, Cys-141, and His-165 contribute to the active site.

Belongs to the peptidase C15 family. As to quaternary structure, homotetramer.

The protein localises to the cytoplasm. It catalyses the reaction Release of an N-terminal pyroglutamyl group from a polypeptide, the second amino acid generally not being Pro.. Its function is as follows. Removes 5-oxoproline from various penultimate amino acid residues except L-proline. The polypeptide is Pyrrolidone-carboxylate peptidase (Brachyspira hyodysenteriae (strain ATCC 49526 / WA1)).